Consider the following 137-residue polypeptide: Nucleoside diphosphate kinase (137 aa).

Residues K9, F57, R85, T91, R102, and N112 each contribute to the ATP site. Catalysis depends on H115, which acts as the Pros-phosphohistidine intermediate.

It belongs to the NDK family. As to quaternary structure, homotetramer. Mg(2+) serves as cofactor.

It localises to the cytoplasm. The enzyme catalyses a 2'-deoxyribonucleoside 5'-diphosphate + ATP = a 2'-deoxyribonucleoside 5'-triphosphate + ADP. It catalyses the reaction a ribonucleoside 5'-diphosphate + ATP = a ribonucleoside 5'-triphosphate + ADP. In terms of biological role, major role in the synthesis of nucleoside triphosphates other than ATP. The ATP gamma phosphate is transferred to the NDP beta phosphate via a ping-pong mechanism, using a phosphorylated active-site intermediate. The polypeptide is Nucleoside diphosphate kinase (Campylobacter lari (strain RM2100 / D67 / ATCC BAA-1060)).